Reading from the N-terminus, the 574-residue chain is Glycine--tRNA ligase (574 aa).

Residues R96 and E162 each contribute to the substrate site. Residues 194-196 (RNE), 204-209 (IRLREF), 327-328 (EC), and 450-453 (GIDR) contribute to the ATP site. Residue 209–213 (FTQAE) coordinates substrate. 446-450 (EPSYG) is a binding site for substrate.

Belongs to the class-II aminoacyl-tRNA synthetase family.

The protein resides in the cytoplasm. It carries out the reaction tRNA(Gly) + glycine + ATP = glycyl-tRNA(Gly) + AMP + diphosphate. In terms of biological role, catalyzes the attachment of glycine to tRNA(Gly). This Methanococcus vannielii (strain ATCC 35089 / DSM 1224 / JCM 13029 / OCM 148 / SB) protein is Glycine--tRNA ligase.